A 312-amino-acid polypeptide reads, in one-letter code: Signal peptidase I (312 aa).

The chain crosses the membrane as a helical span at residues Ile-7–Leu-27. The Cytoplasmic segment spans residues Ile-28–Ser-63. The helical transmembrane segment at Leu-64–Ile-84 threads the bilayer. Residues Pro-85–Tyr-312 lie on the Extracellular side of the membrane. Active-site residues include Ser-88 and Lys-142.

Belongs to the peptidase S26 family.

The protein resides in the cell membrane. It catalyses the reaction Cleavage of hydrophobic, N-terminal signal or leader sequences from secreted and periplasmic proteins.. The protein is Signal peptidase I (lepB) of Buchnera aphidicola subsp. Schizaphis graminum (strain Sg).